The chain runs to 366 residues: Neutral protease 2 homolog BDBG_02110 (366 aa).

The signal sequence occupies residues 1 to 19; sequence MQLSSVLLTAAGLLAPVYS. The propeptide occupies 23-184; it reads ISIGRRSEGL…RAKIHDHLAQ (162 aa). N-linked (GlcNAc...) asparagine glycans are attached at residues asparagine 123 and asparagine 192. Cysteine 272 and cysteine 290 are joined by a disulfide. Zn(2+) is bound at residue histidine 314. Glutamate 315 is a catalytic residue. Histidine 318 is a Zn(2+) binding site.

Belongs to the peptidase M35 family. Zn(2+) serves as cofactor.

It is found in the secreted. It carries out the reaction Preferential cleavage of bonds with hydrophobic residues in P1'. Also 3-Asn-|-Gln-4 and 8-Gly-|-Ser-9 bonds in insulin B chain.. In terms of biological role, secreted metalloproteinase that allows assimilation of proteinaceous substrates. Shows high activities on basic nuclear substrates such as histone and protamine. This Blastomyces gilchristii (strain SLH14081) (Blastomyces dermatitidis) protein is Neutral protease 2 homolog BDBG_02110.